A 368-amino-acid chain; its full sequence is Probable ubiquitin receptor RAD23a (368 aa).

One can recognise a Ubiquitin-like domain in the interval 1–77 (MKLTVKTLKG…GFLVVMLSKS (77 aa)). A compositionally biased stretch (low complexity) spans 80 to 111 (ASSAGPSSTQPTSTTTSTISSTTLAAPSTTQS). Positions 80 to 136 (ASSAGPSSTQPTSTTTSTISSTTLAAPSTTQSIAVPASNSTPVQEQPTAQSDTYGQA) are disordered. Polar residues predominate over residues 116-136 (ASNSTPVQEQPTAQSDTYGQA). Residues 142–185 (SGSSIEQMVQQIMEMGGGSWDKETVTRALRAAYNNPERAVDYLY) enclose the UBA 1 domain. The segment at 202–222 (VGSGRELTAPPPSGGPNSSPL) is disordered. The region spanning 239–282 (GTLEFLRGNDQFQQLRSMVNSNPQILQPMLQELGKQNPQLLRLI) is the STI1 domain. The 41-residue stretch at 320 to 360 (VTPEEQESIERLEAMGFDRAIVIEAFLSCDRNEELAANYLL) folds into the UBA 2 domain.

Belongs to the RAD23 family. In terms of assembly, interacts with 'Lys-48'-linked polyubiquitin chains. Interacts with RPN10. In terms of tissue distribution, widely expressed in the whole plant.

Its subcellular location is the nucleus. It is found in the cytoplasm. In terms of biological role, may be involved in nucleotide excision repair. Binds and presumably selects ubiquitin-conjugates for destruction. Prefers multiubiquitin chains rather than single ubiquitins, with a binding affinity for 'Lys-48'-linked ubiquitin chains. Acts as a ubiquitin receptor that associates with the 26S proteasomal docking subunit RPN10 for the indirect recognition of ubiquitinated substrates of ubiquitin/26S proteasome-mediated proteolysis (UPP). Involved in UV tolerance in roots, specifically in dark conditions. The chain is Probable ubiquitin receptor RAD23a from Arabidopsis thaliana (Mouse-ear cress).